The sequence spans 435 residues: Serine--tRNA ligase (435 aa).

234–236 (TAE) is an L-serine binding site. Position 265–267 (265–267 (RRE)) interacts with ATP. L-serine is bound at residue glutamate 288. Residue 352-355 (EISS) participates in ATP binding. Serine 388 is a binding site for L-serine.

Belongs to the class-II aminoacyl-tRNA synthetase family. Type-1 seryl-tRNA synthetase subfamily. Homodimer. The tRNA molecule binds across the dimer.

The protein resides in the cytoplasm. It carries out the reaction tRNA(Ser) + L-serine + ATP = L-seryl-tRNA(Ser) + AMP + diphosphate + H(+). It catalyses the reaction tRNA(Sec) + L-serine + ATP = L-seryl-tRNA(Sec) + AMP + diphosphate + H(+). It participates in aminoacyl-tRNA biosynthesis; selenocysteinyl-tRNA(Sec) biosynthesis; L-seryl-tRNA(Sec) from L-serine and tRNA(Sec): step 1/1. Functionally, catalyzes the attachment of serine to tRNA(Ser). Is also able to aminoacylate tRNA(Sec) with serine, to form the misacylated tRNA L-seryl-tRNA(Sec), which will be further converted into selenocysteinyl-tRNA(Sec). This chain is Serine--tRNA ligase, found in Synechococcus sp. (strain JA-2-3B'a(2-13)) (Cyanobacteria bacterium Yellowstone B-Prime).